The primary structure comprises 85 residues: Major outer membrane protein 1 (85 aa).

Positions methionine 1 to glycine 18 are cleaved as a signal peptide. Residues tyrosine 22–leucine 42 form a helical membrane-spanning segment.

As to quaternary structure, forms extremely stable complexes with apparent masses of 150, 50, 45 and 38 kDa. Found in a ring-shaped complex of 7 nm diameter with a 2 nm channel through the middle. Complete denaturation requires temperatures over 110 degrees Celsius.

The protein resides in the cell outer membrane. In terms of biological role, the most abundant protein of the outer membrane, it forms a pore through it. This chain is Major outer membrane protein 1 (ihomp1), found in Ignicoccus hospitalis (strain KIN4/I / DSM 18386 / JCM 14125).